We begin with the raw amino-acid sequence, 384 residues long: DNA dC-&gt;dU-editing enzyme APOBEC-3G (384 aa).

Positions 1-60 are essential for cytoplasmic localization; that stretch reads MNPQFRNMVDGMDPHKFSYNFKNRPILSRRNTVWLCYEVKTKGPSRPPLDAKIFRGQVYF. 2 consecutive CMP/dCMP-type deaminase domains span residues 29–138 and 214–328; these read RRNT…LRSL and GRHE…LRTL. Residue threonine 32 is modified to Phosphothreonine; by PKA. Residues histidine 65, cysteine 97, and cysteine 100 each contribute to the Zn(2+) site. The necessary for homooligomerization stretch occupies residues 209–336; the sequence is EPCVEGRHET…TLDEAEAKIS (128 aa). Positions 213–215 are interaction with DNA; that stretch reads EGR. Position 218 is a phosphothreonine; by PKA and CAMK2 (threonine 218). Histidine 257 contributes to the Zn(2+) binding site. The active-site Proton donor is glutamate 259. The Zn(2+) site is built by cysteine 288 and cysteine 291. The tract at residues 313-320 is interaction with DNA; the sequence is RIYDDQGR.

Belongs to the cytidine and deoxycytidylate deaminase family. In terms of assembly, homodimer. Requires Zn(2+) as cofactor.

It localises to the cytoplasm. The protein localises to the nucleus. The protein resides in the P-body. The catalysed reaction is a 2'-deoxycytidine in single-stranded DNA + H2O + H(+) = a 2'-deoxyuridine in single-stranded DNA + NH4(+). Its function is as follows. DNA deaminase (cytidine deaminase) which acts as an inhibitor of retrovirus replication and retrotransposon mobility. After the penetration of retroviral nucleocapsids into target cells of infection and the initiation of reverse transcription, it can induce the conversion of cytosine to uracil in the minus-sense single-strand viral DNA, leading to G-to-A hypermutations in the subsequent plus-strand viral DNA. The resultant detrimental levels of mutations in the proviral genome, along with a deamination-independent mechanism that works prior to the proviral integration, together exert efficient antiretroviral effects in infected target cells. Selectively targets single-stranded DNA and does not deaminate double-stranded DNA or single- or double-stranded RNA. This is DNA dC-&gt;dU-editing enzyme APOBEC-3G (APOBEC3G) from Pongo pygmaeus (Bornean orangutan).